Here is a 496-residue protein sequence, read N- to C-terminus: NAD(P)H-quinone oxidoreductase subunit 2, chloroplastic (496 aa).

Transmembrane regions (helical) follow at residues Ser14–Val34, Met42–Trp62, Phe79–Phe99, Leu109–Ala129, Ile133–Val153, Leu167–Leu187, Leu210–Val230, Pro244–Ile264, Ile281–Thr301, Arg305–Gly325, Leu334–Phe354, Ala377–Phe397, Ile400–Phe420, and Ile469–Phe489.

This sequence belongs to the complex I subunit 2 family. In terms of assembly, NDH is composed of at least 16 different subunits, 5 of which are encoded in the nucleus.

Its subcellular location is the plastid. It is found in the chloroplast thylakoid membrane. The enzyme catalyses a plastoquinone + NADH + (n+1) H(+)(in) = a plastoquinol + NAD(+) + n H(+)(out). It catalyses the reaction a plastoquinone + NADPH + (n+1) H(+)(in) = a plastoquinol + NADP(+) + n H(+)(out). Functionally, NDH shuttles electrons from NAD(P)H:plastoquinone, via FMN and iron-sulfur (Fe-S) centers, to quinones in the photosynthetic chain and possibly in a chloroplast respiratory chain. The immediate electron acceptor for the enzyme in this species is believed to be plastoquinone. Couples the redox reaction to proton translocation, and thus conserves the redox energy in a proton gradient. The sequence is that of NAD(P)H-quinone oxidoreductase subunit 2, chloroplastic from Chara vulgaris (Common stonewort).